The sequence spans 459 residues: tRNA modification GTPase MnmE (459 aa).

The (6S)-5-formyl-5,6,7,8-tetrahydrofolate site is built by arginine 22, glutamate 85, and arginine 124. One can recognise a TrmE-type G domain in the interval 221–380 (GLSTVIVGKP…LEIQIRDLFF (160 aa)). Asparagine 231 lines the K(+) pocket. GTP is bound by residues 231–236 (NVGKSS), 250–256 (TEVAGTT), and 275–278 (DTAG). Serine 235 contributes to the Mg(2+) binding site. Residues threonine 250, valine 252, and threonine 255 each contribute to the K(+) site. Residue threonine 256 coordinates Mg(2+). A (6S)-5-formyl-5,6,7,8-tetrahydrofolate-binding site is contributed by lysine 459.

The protein belongs to the TRAFAC class TrmE-Era-EngA-EngB-Septin-like GTPase superfamily. TrmE GTPase family. In terms of assembly, homodimer. Heterotetramer of two MnmE and two MnmG subunits. It depends on K(+) as a cofactor.

It localises to the cytoplasm. Its function is as follows. Exhibits a very high intrinsic GTPase hydrolysis rate. Involved in the addition of a carboxymethylaminomethyl (cmnm) group at the wobble position (U34) of certain tRNAs, forming tRNA-cmnm(5)s(2)U34. The protein is tRNA modification GTPase MnmE of Staphylococcus aureus (strain bovine RF122 / ET3-1).